The primary structure comprises 379 residues: MSYLLRSDPVSRIHPEPQSLTSFDHFDLLPDSLLLLIFDKVADVKDLGRCCIVSRRFHSLVPFVENVLVRVDCVISDDDSSSSDENHRFSLNTASISDAGGAGGSFSALFRLVFAPIFKPFQMLGQILGPKRSSSSFDASFSAINDEIGVTHHSPTQVLKNFGEIRFLKIELPTGELGIEDGILLKWRADFGSTLDNCMILGASSVIQSNSVKNHENSVDEDNGNIPESFYTNGGLKLRVVWTISSLIAASARHYLLQPIINEHKSLDRLVLSDADGQGVLCMNREQLEELRVTPLSASSASKRTLVPALNMRLWYAPELDLPDGTVLKGATLVAIRPSESKKEVCDASWLSDAFEEPFGTVAKMLIKRRTYCLEMNSF.

Positions 24–72 (DHFDLLPDSLLLLIFDKVADVKDLGRCCIVSRRFHSLVPFVENVLVRVD) constitute an F-box domain.

This Arabidopsis thaliana (Mouse-ear cress) protein is F-box protein At1g30200.